A 361-amino-acid chain; its full sequence is Peptide chain release factor 1 (361 aa).

Gln-235 bears the N5-methylglutamine mark. A disordered region spans residues 287 to 309 (QKEASAMRSAQVGSGDRSERIRT).

This sequence belongs to the prokaryotic/mitochondrial release factor family. Post-translationally, methylated by PrmC. Methylation increases the termination efficiency of RF1.

It is found in the cytoplasm. Functionally, peptide chain release factor 1 directs the termination of translation in response to the peptide chain termination codons UAG and UAA. The protein is Peptide chain release factor 1 of Chlamydia caviae (strain ATCC VR-813 / DSM 19441 / 03DC25 / GPIC) (Chlamydophila caviae).